The chain runs to 128 residues: Large ribosomal subunit protein bL19 (128 aa).

It belongs to the bacterial ribosomal protein bL19 family.

This protein is located at the 30S-50S ribosomal subunit interface and may play a role in the structure and function of the aminoacyl-tRNA binding site. This chain is Large ribosomal subunit protein bL19, found in Herminiimonas arsenicoxydans.